A 654-amino-acid chain; its full sequence is Cysteine-rich receptor-like protein kinase 40 (654 aa).

The signal sequence occupies residues 1-27 (MGKCSALMIFLSSSLLLVLQTLHVVNA). 2 consecutive Gnk2-homologous domains span residues 28-131 (VKCF…NQST) and 143-250 (WPSP…LYSF). Over 28–287 (VKCFGNSFNG…VKKGKSIGYG (260 aa)) the chain is Extracellular. N-linked (GlcNAc...) asparagine glycosylation is found at Asn38, Asn65, Asn128, Asn154, Asn167, and Asn256. Residues 288–308 (GIIAIVVVFTFINLLVFIGFI) form a helical membrane-spanning segment. At 309–654 (KVYARRGKLN…DDVFTELSCR (346 aa)) the chain is on the cytoplasmic side. In terms of domain architecture, Protein kinase spans 348–619 (FSSENTLGQG…VIIWLGSETI (272 aa)). ATP-binding positions include 354-362 (LGQGGFGTV) and Lys376. Phosphotyrosine is present on Tyr421. The active-site Proton acceptor is Asp473. Ser477 is subject to Phosphoserine. Position 513 is a phosphothreonine (Thr513). Residue Tyr521 is modified to Phosphotyrosine.

It belongs to the protein kinase superfamily. Ser/Thr protein kinase family. CRK subfamily.

Its subcellular location is the membrane. It carries out the reaction L-seryl-[protein] + ATP = O-phospho-L-seryl-[protein] + ADP + H(+). The catalysed reaction is L-threonyl-[protein] + ATP = O-phospho-L-threonyl-[protein] + ADP + H(+). The chain is Cysteine-rich receptor-like protein kinase 40 (CRK40) from Arabidopsis thaliana (Mouse-ear cress).